The following is a 330-amino-acid chain: Lipoyl synthase (330 aa).

7 residues coordinate [4Fe-4S] cluster: C77, C82, C88, C103, C107, C110, and S317. The region spanning 89 to 306 is the Radical SAM core domain; that stretch reads FNHGTATFMI…RSEAEKMGFE (218 aa).

It belongs to the radical SAM superfamily. Lipoyl synthase family. The cofactor is [4Fe-4S] cluster.

The protein resides in the cytoplasm. It carries out the reaction [[Fe-S] cluster scaffold protein carrying a second [4Fe-4S](2+) cluster] + N(6)-octanoyl-L-lysyl-[protein] + 2 oxidized [2Fe-2S]-[ferredoxin] + 2 S-adenosyl-L-methionine + 4 H(+) = [[Fe-S] cluster scaffold protein] + N(6)-[(R)-dihydrolipoyl]-L-lysyl-[protein] + 4 Fe(3+) + 2 hydrogen sulfide + 2 5'-deoxyadenosine + 2 L-methionine + 2 reduced [2Fe-2S]-[ferredoxin]. The protein operates within protein modification; protein lipoylation via endogenous pathway; protein N(6)-(lipoyl)lysine from octanoyl-[acyl-carrier-protein]: step 2/2. Its function is as follows. Catalyzes the radical-mediated insertion of two sulfur atoms into the C-6 and C-8 positions of the octanoyl moiety bound to the lipoyl domains of lipoate-dependent enzymes, thereby converting the octanoylated domains into lipoylated derivatives. This Haemophilus ducreyi (strain 35000HP / ATCC 700724) protein is Lipoyl synthase.